The chain runs to 353 residues: MNGTEGPYFYIPMVNTTGIVRSPYEYPQYYLVNPAAYAALGAYMFLLILLGFPINFLTLYVTIEHKKLRTPLNYILLNLAVANLFMVFGGFTTTMYTSMHGYFVLGRLGCNLEGFFATLGGEIALWSLVVLAVERWMVVCKPISNFRFGENHAIMGLAFTWVMASACAVPPLVGWSRYIPEGMQCSCGIDYYTRAEGFNNESFVIYMFVCHFLIPLVVVFFCYGRLLCAVKEAAAAQQESETTQRAEREVSRMVVIMVVAFLICWCPYAGVAWYIFTHQGSEFGPLFMTFPAFFAKSSSIYNPMIYICMNKQFRHCMITTLCCGKNPFEEEEGASTTSKTEASSVSSSSVSPA.

The Extracellular segment spans residues 1-36; it reads MNGTEGPYFYIPMVNTTGIVRSPYEYPQYYLVNPAA. 2 N-linked (GlcNAc...) asparagine glycosylation sites follow: N2 and N15. The helical transmembrane segment at 37 to 61 threads the bilayer; it reads YAALGAYMFLLILLGFPINFLTLYV. The Cytoplasmic segment spans residues 62–73; the sequence is TIEHKKLRTPLN. Residues 74-96 form a helical membrane-spanning segment; it reads YILLNLAVANLFMVFGGFTTTMY. Residues 97–110 are Extracellular-facing; that stretch reads TSMHGYFVLGRLGC. C110 and C187 form a disulfide bridge. Residues 111–133 form a helical membrane-spanning segment; that stretch reads NLEGFFATLGGEIALWSLVVLAV. The short motif at 134-136 is the 'Ionic lock' involved in activated form stabilization element; the sequence is ERW. At 134–152 the chain is on the cytoplasmic side; that stretch reads ERWMVVCKPISNFRFGENH. Residues 153–173 traverse the membrane as a helical segment; sequence AIMGLAFTWVMASACAVPPLV. Residues 174-202 lie on the Extracellular side of the membrane; the sequence is GWSRYIPEGMQCSCGIDYYTRAEGFNNES. N200 is a glycosylation site (N-linked (GlcNAc...) asparagine). Residues 203 to 224 traverse the membrane as a helical segment; sequence FVIYMFVCHFLIPLVVVFFCYG. At 225–252 the chain is on the cytoplasmic side; it reads RLLCAVKEAAAAQQESETTQRAEREVSR. Residues 253–274 form a helical membrane-spanning segment; that stretch reads MVVIMVVAFLICWCPYAGVAWY. The Extracellular portion of the chain corresponds to 275 to 286; the sequence is IFTHQGSEFGPL. A helical transmembrane segment spans residues 287-308; the sequence is FMTFPAFFAKSSSIYNPMIYIC. At K296 the chain carries N6-(retinylidene)lysine. Residues 309–353 are Cytoplasmic-facing; sequence MNKQFRHCMITTLCCGKNPFEEEEGASTTSKTEASSVSSSSVSPA. S-palmitoyl cysteine attachment occurs at residues C322 and C323. The segment at 330–353 is disordered; it reads EEEGASTTSKTEASSVSSSSVSPA. Positions 334 to 353 are enriched in low complexity; that stretch reads ASTTSKTEASSVSSSSVSPA.

It belongs to the G-protein coupled receptor 1 family. Opsin subfamily. Phosphorylated on some or all of the serine and threonine residues present in the C-terminal region. In terms of processing, contains one covalently linked retinal chromophore.

It is found in the membrane. The protein resides in the cell projection. It localises to the cilium. The protein localises to the photoreceptor outer segment. Its function is as follows. Photoreceptor required for image-forming vision at low light intensity. While most salt water fish species use retinal as chromophore, most freshwater fish use 3-dehydroretinal, or a mixture of retinal and 3-dehydroretinal. Light-induced isomerization of 11-cis to all-trans retinal triggers a conformational change that activates signaling via G-proteins. Subsequent receptor phosphorylation mediates displacement of the bound G-protein alpha subunit by arrestin and terminates signaling. In Mugil cephalus (Flathead mullet), this protein is Rhodopsin (rho).